A 304-amino-acid chain; its full sequence is Methionyl-tRNA formyltransferase (304 aa).

109 to 112 (SDLP) lines the (6S)-5,6,7,8-tetrahydrofolate pocket.

The protein belongs to the Fmt family.

It carries out the reaction L-methionyl-tRNA(fMet) + (6R)-10-formyltetrahydrofolate = N-formyl-L-methionyl-tRNA(fMet) + (6S)-5,6,7,8-tetrahydrofolate + H(+). Attaches a formyl group to the free amino group of methionyl-tRNA(fMet). The formyl group appears to play a dual role in the initiator identity of N-formylmethionyl-tRNA by promoting its recognition by IF2 and preventing the misappropriation of this tRNA by the elongation apparatus. The sequence is that of Methionyl-tRNA formyltransferase from Rickettsia bellii (strain RML369-C).